We begin with the raw amino-acid sequence, 153 residues long: MANSNLPRRIIKETQRLLSEPAPGISASPSEDNMRYFNVMILGPTQSPYEGGVFKLELFLPEEYPMAAPKVRFLTKIYHPNIDKLGRICLDILKDKWSPALQIRTVLLSIQALLSAPNPDDPLSENIAKHWKSNEAEAVDTAKEWTRLYASGA.

Residues 5–151 enclose the UBC core domain; it reads NLPRRIIKET…AKEWTRLYAS (147 aa). Cysteine 89 (glycyl thioester intermediate) is an active-site residue.

This sequence belongs to the ubiquitin-conjugating enzyme family. As to quaternary structure, interacts with yeast and human Mms2, with the RING domain of RGLG2 and with UEV1A, UEV1B, UEV1C and UEV1D. In terms of tissue distribution, ubiquitously expressed at low level. Mainly expressed in the vasculature.

The enzyme catalyses S-ubiquitinyl-[E1 ubiquitin-activating enzyme]-L-cysteine + [E2 ubiquitin-conjugating enzyme]-L-cysteine = [E1 ubiquitin-activating enzyme]-L-cysteine + S-ubiquitinyl-[E2 ubiquitin-conjugating enzyme]-L-cysteine.. The protein operates within protein modification; protein ubiquitination. Catalyzes the synthesis of non-canonical poly-ubiquitin chains that are linked through 'Lys-63'. This type of poly-ubiquitination does not lead to protein degradation by the proteasome. Mediates transcriptional activation of target genes. Required for postreplication repair of UV-damaged DNA and for adapting root developmental programs to suboptimal availability of iron. The polypeptide is Ubiquitin-conjugating enzyme E2 35 (UBC35) (Arabidopsis thaliana (Mouse-ear cress)).